A 493-amino-acid polypeptide reads, in one-letter code: Glycerol kinase (493 aa).

Threonine 13 is a binding site for ADP. Residues threonine 13, threonine 14, and serine 15 each contribute to the ATP site. Threonine 13 contacts sn-glycerol 3-phosphate. Arginine 17 serves as a coordination point for ADP. Sn-glycerol 3-phosphate-binding residues include arginine 83, glutamate 84, tyrosine 135, and aspartate 244. Positions 83, 84, 135, 244, and 245 each coordinate glycerol. Positions 266 and 309 each coordinate ADP. ATP contacts are provided by threonine 266, glycine 309, glutamine 313, and glycine 410. ADP-binding residues include glycine 410 and asparagine 414.

Belongs to the FGGY kinase family.

The enzyme catalyses glycerol + ATP = sn-glycerol 3-phosphate + ADP + H(+). The protein operates within polyol metabolism; glycerol degradation via glycerol kinase pathway; sn-glycerol 3-phosphate from glycerol: step 1/1. Its activity is regulated as follows. Inhibited by fructose 1,6-bisphosphate (FBP). Functionally, key enzyme in the regulation of glycerol uptake and metabolism. Catalyzes the phosphorylation of glycerol to yield sn-glycerol 3-phosphate. The polypeptide is Glycerol kinase (Shewanella piezotolerans (strain WP3 / JCM 13877)).